The chain runs to 366 residues: NADH-quinone oxidoreductase subunit D (366 aa).

Belongs to the complex I 49 kDa subunit family. NDH-1 is composed of 14 different subunits. Subunits NuoB, C, D, E, F, and G constitute the peripheral sector of the complex.

It is found in the cell membrane. The catalysed reaction is a quinone + NADH + 5 H(+)(in) = a quinol + NAD(+) + 4 H(+)(out). Functionally, NDH-1 shuttles electrons from NADH, via FMN and iron-sulfur (Fe-S) centers, to quinones in the respiratory chain. The immediate electron acceptor for the enzyme in this species is believed to be a menaquinone. Couples the redox reaction to proton translocation (for every two electrons transferred, four hydrogen ions are translocated across the cytoplasmic membrane), and thus conserves the redox energy in a proton gradient. This chain is NADH-quinone oxidoreductase subunit D, found in Desulforamulus reducens (strain ATCC BAA-1160 / DSM 100696 / MI-1) (Desulfotomaculum reducens).